The primary structure comprises 184 residues: Orotate phosphoribosyltransferase (184 aa).

5-phospho-alpha-D-ribose 1-diphosphate-binding positions include arginine 99, lysine 100, lysine 103, histidine 105, and 125-133 (EDTTTTGNS). Orotate is bound by residues threonine 129 and arginine 157.

The protein belongs to the purine/pyrimidine phosphoribosyltransferase family. PyrE subfamily. In terms of assembly, homodimer. Mg(2+) is required as a cofactor.

The enzyme catalyses orotidine 5'-phosphate + diphosphate = orotate + 5-phospho-alpha-D-ribose 1-diphosphate. The protein operates within pyrimidine metabolism; UMP biosynthesis via de novo pathway; UMP from orotate: step 1/2. Catalyzes the transfer of a ribosyl phosphate group from 5-phosphoribose 1-diphosphate to orotate, leading to the formation of orotidine monophosphate (OMP). In Corynebacterium glutamicum (strain ATCC 13032 / DSM 20300 / JCM 1318 / BCRC 11384 / CCUG 27702 / LMG 3730 / NBRC 12168 / NCIMB 10025 / NRRL B-2784 / 534), this protein is Orotate phosphoribosyltransferase.